The sequence spans 377 residues: 3-dehydroquinate synthase (377 aa).

Residues 113 to 117, 137 to 138, lysine 150, and lysine 159 each bind NAD(+); these read GVIGD and TT. Positions 192, 254, and 273 each coordinate Zn(2+).

Belongs to the sugar phosphate cyclases superfamily. Dehydroquinate synthase family. It depends on Co(2+) as a cofactor. The cofactor is Zn(2+). Requires NAD(+) as cofactor.

Its subcellular location is the cytoplasm. The enzyme catalyses 7-phospho-2-dehydro-3-deoxy-D-arabino-heptonate = 3-dehydroquinate + phosphate. It participates in metabolic intermediate biosynthesis; chorismate biosynthesis; chorismate from D-erythrose 4-phosphate and phosphoenolpyruvate: step 2/7. In terms of biological role, catalyzes the conversion of 3-deoxy-D-arabino-heptulosonate 7-phosphate (DAHP) to dehydroquinate (DHQ). This is 3-dehydroquinate synthase from Bartonella bacilliformis (strain ATCC 35685 / KC583 / Herrer 020/F12,63).